The chain runs to 368 residues: Anti-sigma-X factor RsiX (368 aa).

Over residues Gln-73–Lys-87 the composition is skewed to polar residues. The tract at residues Gln-73–Asp-101 is disordered.

The protein localises to the cell membrane. The anti-sigma factor for extracytoplasmic function (ECF) sigma factor SigX, inhibits SigX activity and stabilizes it. This chain is Anti-sigma-X factor RsiX (rsiX), found in Bacillus subtilis (strain 168).